We begin with the raw amino-acid sequence, 562 residues long: Phosphoacetylglucosamine mutase (562 aa).

The Phosphoserine intermediate role is filled by S74. Positions 74, 291, 293, and 295 each coordinate Mg(2+). Substrate contacts are provided by residues E395–N397, R526–T530, and R535.

Belongs to the phosphohexose mutase family. It depends on Mg(2+) as a cofactor.

The enzyme catalyses N-acetyl-alpha-D-glucosamine 1-phosphate = N-acetyl-D-glucosamine 6-phosphate. Its pathway is nucleotide-sugar biosynthesis; UDP-N-acetyl-alpha-D-glucosamine biosynthesis; N-acetyl-alpha-D-glucosamine 1-phosphate from alpha-D-glucosamine 6-phosphate (route I): step 2/2. Functionally, interconverts GlcNAc-6-P and GlcNAc-1-P. The protein is Phosphoacetylglucosamine mutase of Oryza sativa subsp. japonica (Rice).